A 403-amino-acid polypeptide reads, in one-letter code: Imidazolonepropionase (403 aa).

Fe(3+) contacts are provided by histidine 69 and histidine 71. Zn(2+)-binding residues include histidine 69 and histidine 71. The 4-imidazolone-5-propanoate site is built by arginine 78, tyrosine 141, and histidine 174. Position 141 (tyrosine 141) interacts with N-formimidoyl-L-glutamate. A Fe(3+)-binding site is contributed by histidine 239. Histidine 239 is a Zn(2+) binding site. Glutamine 242 provides a ligand contact to 4-imidazolone-5-propanoate. Aspartate 314 lines the Fe(3+) pocket. Aspartate 314 serves as a coordination point for Zn(2+). N-formimidoyl-L-glutamate is bound by residues asparagine 316 and glycine 318. Serine 319 is a binding site for 4-imidazolone-5-propanoate.

It belongs to the metallo-dependent hydrolases superfamily. HutI family. Zn(2+) is required as a cofactor. The cofactor is Fe(3+).

It is found in the cytoplasm. The catalysed reaction is 4-imidazolone-5-propanoate + H2O = N-formimidoyl-L-glutamate. It functions in the pathway amino-acid degradation; L-histidine degradation into L-glutamate; N-formimidoyl-L-glutamate from L-histidine: step 3/3. Catalyzes the hydrolytic cleavage of the carbon-nitrogen bond in imidazolone-5-propanoate to yield N-formimidoyl-L-glutamate. It is the third step in the universal histidine degradation pathway. This Legionella pneumophila (strain Paris) protein is Imidazolonepropionase.